Here is a 96-residue protein sequence, read N- to C-terminus: Probable quinol oxidase subunit 4 (96 aa).

The next 3 membrane-spanning stretches (helical) occupy residues 8–28, 36–56, and 68–88; these read TVGFIASIVLTLLAVYVTLYT, LTIIFGFAFVQAGLQLLMFMH, and FKVIFALVITLCFVVGTYWVM.

Belongs to the cytochrome c oxidase bacterial subunit 4 family.

It localises to the cell membrane. The catalysed reaction is 2 a quinol + O2 = 2 a quinone + 2 H2O. Functionally, catalyzes quinol oxidation with the concomitant reduction of oxygen to water. This Staphylococcus aureus (strain USA300) protein is Probable quinol oxidase subunit 4 (qoxD).